A 445-amino-acid chain; its full sequence is C4-dicarboxylate transport protein (445 aa).

Helical transmembrane passes span 24 to 44, 62 to 82, 105 to 125, 163 to 183, 201 to 221, 237 to 257, 322 to 342, and 370 to 390; these read VLYI…WLSP, LIKM…IAHI, FALI…GLAA, GDIL…MALG, FGVI…AMAF, LVAL…GVIA, IYMT…LSFS, and AGTL…VFSI.

The protein belongs to the dicarboxylate/amino acid:cation symporter (DAACS) (TC 2.A.23) family.

The protein resides in the cell inner membrane. Its function is as follows. Responsible for the transport of dicarboxylates such as succinate, fumarate, and malate from the periplasm across the membrane. This is C4-dicarboxylate transport protein from Rhodopseudomonas palustris (strain HaA2).